A 461-amino-acid polypeptide reads, in one-letter code: MAAKRYTSMAYANADEMTFGVSKYPVKAGLDLEIGAGYTIPEINYAPRPEAGASKEKLIKEYERITTDVMERMVQVGFPAIILETEHVQQMSNNPSWGAEVAHAQKTIMEKYHDEYGIKCALRHTIGDIRENREFLQLRGDKYSVFLEAFEQCAENGADLLSVESMGGKEVFDYAVLRNDIPGLLYSIGCLGSIDMELIWTDISKIAKKTGTISAGDTDCAQANTAMFIGGGLLNKNLAHTIAVIARAISAPRSLVAYEAGAVGPGKDCGYENIIVKAITGMPMTMEGKTSTCAHSDVMGNLVMQCCDCWSNESVEYHGEFGGTTVQCWSETLAYDCALMNTALETKNDKVLRDLMMLSDRYRDPQAYMLAYDNAYRVGQSIVKDGDNIYLRAKNAAIECCNIIEEGAAGKLELSRFETKALADAKAALEALPDDMDKFMDDCLTKYKSEVKVFKPENYGF.

The Zn(2+) site is built by glutamate 164, cysteine 220, and cysteine 269.

The protein belongs to the MtaB family. In terms of assembly, heterotetramer, composed of 2 MtaB and 2 MtaC subunits.

It catalyses the reaction Co(I)-[methanol-specific corrinoid protein] + methanol + H(+) = methyl-Co(III)-[methanol-specific corrinoid protein] + H2O. Methyltransferase involved in methanogenesis in the methanol pathway. Catalyzes the methylation of the MtaC-bound cob(I)amide. This Methanosarcina barkeri (strain Fusaro / DSM 804) protein is Methanol--corrinoid protein co-methyltransferase (mtaB).